A 259-amino-acid chain; its full sequence is MKIEDCTVEENVQIAKDTYKMKIKGNFVKECRTPGQFVNIRIGDGREHVLRRPISISEIDRGENLVTIIYRIVGEGTKFMANIKKGNEIDVMGPLGRGYDVLSLTKEQTALLVGGGIGVPPLYELAKQFNKRGIKTIIILGFNSKDEVFYEDEFKKFGETYVSTIDGSVGTKGFVTDVIKKLQAENNLVFDKYYSCGPVPMLKALVNAVGEDGYISLENRMACGIGACYACVCKKKKKDDYTRVCYDGPVYLASDVEIE.

The region spanning 1-101 is the FAD-binding FR-type domain; the sequence is MKIEDCTVEE…MGPLGRGYDV (101 aa). Residues 52 to 55, 69 to 71, and 76 to 77 each bind FAD; these read RPIS, IYR, and GT. 4 residues coordinate [2Fe-2S] cluster: C223, C228, C231, and C245.

Belongs to the PyrK family. Heterotetramer of 2 PyrK and 2 PyrD type B subunits. The cofactor is [2Fe-2S] cluster. It depends on FAD as a cofactor.

It participates in pyrimidine metabolism; UMP biosynthesis via de novo pathway; orotate from (S)-dihydroorotate (NAD(+) route): step 1/1. Responsible for channeling the electrons from the oxidation of dihydroorotate from the FMN redox center in the PyrD type B subunit to the ultimate electron acceptor NAD(+). The protein is Dihydroorotate dehydrogenase B (NAD(+)), electron transfer subunit of Fusobacterium nucleatum subsp. nucleatum (strain ATCC 25586 / DSM 15643 / BCRC 10681 / CIP 101130 / JCM 8532 / KCTC 2640 / LMG 13131 / VPI 4355).